We begin with the raw amino-acid sequence, 161 residues long: MKLNELRDNPGARPKSKRLGRGIGSGKGKTSGKGVKGQKAREGVSLNGFEGGQLPIYRRLPKRGFNNVNRKDYAPLNVGTLAALIESGKIDAGQKITEATLRAAGVYAGSKLAGVRLLGRGEISQKVEIEVSGASASAIAAIEQAGGSVTTTVARAEPASA.

The segment covering 1 to 10 has biased composition (basic and acidic residues); the sequence is MKLNELRDNP. The tract at residues 1-42 is disordered; that stretch reads MKLNELRDNPGARPKSKRLGRGIGSGKGKTSGKGVKGQKARE. Gly residues predominate over residues 21–35; sequence RGIGSGKGKTSGKGV.

Belongs to the universal ribosomal protein uL15 family. As to quaternary structure, part of the 50S ribosomal subunit.

Functionally, binds to the 23S rRNA. The chain is Large ribosomal subunit protein uL15 from Acidiphilium cryptum (strain JF-5).